Here is a 943-residue protein sequence, read N- to C-terminus: MSERTSSSRRSKPASDDTIGNFVIDKEIGKGSFAQVYSGRHKVTGALVAIKSVELARLNTKLKDNLYGEIEILKRLRHPHIVALHDCVESRTHINLIMEYCELGDLSLFIKKRDKLITNPGTHELARKYPVAPNSGLNEVVIRHFLKQLTSAIRFLREANLIHRDVKPQNLLLLPSPQYREANKMHKQILSASHDSFTPAAGLPSLPMLKLADFGFARVLPSTSLAETLCGSPLYMAPEILRYEKYDAKADLWSVGTVLYEMATGRPPFRAVNHVDLLRKIEASGDVIRFSRECVVSSEVKGLVRALLKRNPVERISFEDFFHHPVITGPIPGLVEDDIPKPEKPVLAETKSRIRRANPELSHTRRSRAGPHLLATPIEPKPNPLEQVASPRLSYSPRQEADEGLGIRRPLAQPSTSAPVRPISYVDRSRRYSNASTKVPARDTPPPPHEGSNRSRPKSAVSRPLTDEDKAAQDVAFERDYIIIDKTAVEVNALADQISLYPQQGQPKSGGQIVRRATQQGHPTSTTGAVPSHPGRNAQGGRNDHYRKASHDKTLSGSPGATTSVISKAIQDASLRLFGFKYSPQMLSKGQSPPQIYSPFPAYPTPSTPAGLIMDGKQSAPVDEDSRVAQCIEDYATRSDVVYGFAEVKYKQLVPLAPSVEHGLGGVPTDRMGEEEEGLTMDAVVSLSEEALVLYVKALSLLAKSMDIASLWWSRKSRPESSNNVHSATRDSVNTQALVLKINAAVQWIRSRFNEVLEKAEIVRLRLVEAQNQLPEEHPSHPSNRPPETSALGGSSGGQATFPSVGISAEKLMYDRAVEMSRTAAINEIASEDLPGCEISYVTAVRMLEAVLDSDDDHLPKRRVSTSSKEEQSVAAQDASDDMSSDDKQAVQKMVQMINTRLTYLRKRMHTIAAASKAQQQQQQQQVVVRRRSGDVTPRSVPT.

A Protein kinase domain is found at 22-327 (FVIDKEIGKG…FEDFFHHPVI (306 aa)). ATP contacts are provided by residues 28-36 (IGKGSFAQV) and K51. D165 (proton acceptor) is an active-site residue. 5 disordered regions span residues 334–468 (LVED…LTDE), 503–561 (QQGQ…SPGA), 774–800 (LPEEHPSHPSNRPPETSALGGSSGGQA), 858–888 (HLPKRRVSTSSKEEQSVAAQDASDDMSSDDK), and 914–943 (AASKAQQQQQQQQVVVRRRSGDVTPRSVPT). Residues 338-352 (DIPKPEKPVLAETKS) show a composition bias toward basic and acidic residues. Residues 517–529 (ATQQGHPTSTTGA) are compositionally biased toward polar residues. Positions 542-554 (RNDHYRKASHDKT) are enriched in basic and acidic residues. A compositionally biased stretch (low complexity) spans 919-928 (QQQQQQQQVV).

The protein belongs to the protein kinase superfamily. Ser/Thr protein kinase family. APG1/unc-51/ULK1 subfamily. Homodimer. Forms a ternary complex with ATG13 and ATG17.

It localises to the cytoplasm. The protein localises to the preautophagosomal structure membrane. The enzyme catalyses L-seryl-[protein] + ATP = O-phospho-L-seryl-[protein] + ADP + H(+). It carries out the reaction L-threonyl-[protein] + ATP = O-phospho-L-threonyl-[protein] + ADP + H(+). Functionally, serine/threonine protein kinase involved in the cytoplasm to vacuole transport (Cvt) and found to be essential in autophagy, where it is required for the formation of autophagosomes. Involved in the clearance of protein aggregates which cannot be efficiently cleared by the proteasome. Required for selective autophagic degradation of the nucleus (nucleophagy) as well as for mitophagy which contributes to regulate mitochondrial quantity and quality by eliminating the mitochondria to a basal level to fulfill cellular energy requirements and preventing excess ROS production. Also involved in endoplasmic reticulum-specific autophagic process, in selective removal of ER-associated degradation (ERAD) substrates. Plays a key role in ATG9 and ATG23 cycling through the pre-autophagosomal structure and is necessary to promote ATG18 binding to ATG9 through phosphorylation of ATG9. Catalyzes phosphorylation of ATG4, decreasing the interaction between ATG4 and ATG8 and impairing deconjugation of PE-conjugated forms of ATG8. The protein is Serine/threonine-protein kinase ATG1 of Chaetomium globosum (strain ATCC 6205 / CBS 148.51 / DSM 1962 / NBRC 6347 / NRRL 1970) (Soil fungus).